The chain runs to 218 residues: MEVEEAAYRTVWSEPPKRPAGRTKFRETRHPVYRGVRRRGGRPGAAGRWVCEVRVPGARGSRLWLGTFATAEAAARAHDAAALALRGRAACLNFADSAWRMPPVPASAALAGARGVRDAVAVAVEAFQRQSAAPSSPAETFANDGDEEEDNKDVLPVAAAEVFDAGAFELDDGFRFGGMDAGSYYASLAQGLLVEPPAAGAWWEDGELAGSDMPLWSY.

Positions 1–26 are disordered; that stretch reads MEVEEAAYRTVWSEPPKRPAGRTKFR. Positions 32 to 95 form a DNA-binding region, AP2/ERF; that stretch reads VYRGVRRRGG…RGRAACLNFA (64 aa). The tract at residues 131–151 is disordered; it reads SAAPSSPAETFANDGDEEEDN.

Belongs to the AP2/ERF transcription factor family. ERF subfamily.

The protein localises to the nucleus. Functionally, transcriptional activator that binds specifically to the DNA sequence 5'-[AG]CCGAC-3'. Binding to the C-repeat/DRE element mediates high salinity- and dehydration-inducible transcription. Confers resistance to high salt, cold and drought stress. This Oryza sativa subsp. japonica (Rice) protein is Dehydration-responsive element-binding protein 1B (DREB1B).